The primary structure comprises 300 residues: Actin-related protein 2/3 complex subunit 2-A (300 aa).

Belongs to the ARPC2 family. As to quaternary structure, component of the Arp2/3 complex composed of actr2/arp2, actr3/arp3, arpc1 (arpc1a or arpc1b), arpc2, arpc3, arpc4 and arpc5.

Its subcellular location is the cytoplasm. The protein resides in the cytoskeleton. It is found in the cell projection. It localises to the nucleus. Actin-binding component of the Arp2/3 complex, a multiprotein complex that mediates actin polymerization upon stimulation by nucleation-promoting factor (NPF). The Arp2/3 complex mediates the formation of branched actin networks in the cytoplasm, providing the force for cell motility. In addition to its role in the cytoplasmic cytoskeleton, the Arp2/3 complex also promotes actin polymerization in the nucleus, thereby regulating gene transcription and repair of damaged DNA. The Arp2/3 complex promotes homologous recombination (HR) repair in response to DNA damage by promoting nuclear actin polymerization, leading to drive motility of double-strand breaks (DSBs). The chain is Actin-related protein 2/3 complex subunit 2-A (arpc2-a) from Xenopus laevis (African clawed frog).